Here is a 341-residue protein sequence, read N- to C-terminus: Holliday junction branch migration complex subunit RuvB (341 aa).

The interval 1–182 is large ATPase domain (RuvB-L); that stretch reads MTSSDPTLRP…FGIPTRLQFY (182 aa). ATP is bound by residues L21, R22, G63, K66, T67, T68, 129–131, R172, Y182, and R219; that span reads EDF. Position 67 (T67) interacts with Mg(2+). The segment at 183–253 is small ATPAse domain (RuvB-S); sequence TEDELDLIVA…IADRALTRLG (71 aa). The segment at 256-341 is head domain (RuvB-H); it reads HLGLDLGDRR…KGPGQSDLFG (86 aa). DNA contacts are provided by R292, R311, and R316.

It belongs to the RuvB family. As to quaternary structure, homohexamer. Forms an RuvA(8)-RuvB(12)-Holliday junction (HJ) complex. HJ DNA is sandwiched between 2 RuvA tetramers; dsDNA enters through RuvA and exits via RuvB. An RuvB hexamer assembles on each DNA strand where it exits the tetramer. Each RuvB hexamer is contacted by two RuvA subunits (via domain III) on 2 adjacent RuvB subunits; this complex drives branch migration. In the full resolvosome a probable DNA-RuvA(4)-RuvB(12)-RuvC(2) complex forms which resolves the HJ.

The protein localises to the cytoplasm. The catalysed reaction is ATP + H2O = ADP + phosphate + H(+). Its function is as follows. The RuvA-RuvB-RuvC complex processes Holliday junction (HJ) DNA during genetic recombination and DNA repair, while the RuvA-RuvB complex plays an important role in the rescue of blocked DNA replication forks via replication fork reversal (RFR). RuvA specifically binds to HJ cruciform DNA, conferring on it an open structure. The RuvB hexamer acts as an ATP-dependent pump, pulling dsDNA into and through the RuvAB complex. RuvB forms 2 homohexamers on either side of HJ DNA bound by 1 or 2 RuvA tetramers; 4 subunits per hexamer contact DNA at a time. Coordinated motions by a converter formed by DNA-disengaged RuvB subunits stimulates ATP hydrolysis and nucleotide exchange. Immobilization of the converter enables RuvB to convert the ATP-contained energy into a lever motion, pulling 2 nucleotides of DNA out of the RuvA tetramer per ATP hydrolyzed, thus driving DNA branch migration. The RuvB motors rotate together with the DNA substrate, which together with the progressing nucleotide cycle form the mechanistic basis for DNA recombination by continuous HJ branch migration. Branch migration allows RuvC to scan DNA until it finds its consensus sequence, where it cleaves and resolves cruciform DNA. In Cereibacter sphaeroides (strain ATCC 17029 / ATH 2.4.9) (Rhodobacter sphaeroides), this protein is Holliday junction branch migration complex subunit RuvB.